The sequence spans 335 residues: Probable cytosolic iron-sulfur protein assembly protein Ciao1 (335 aa).

WD repeat units lie at residues 12–51, 57–96, 101–140, 146–185, 192–231, 250–289, and 301–335; these read GHKG…WSTK, GHKR…FECN, GHEN…EFEC, PHTQ…NDWD, SHTS…NTAG, QHSR…KPDE, and AHDQ…KVSE.

Belongs to the WD repeat CIA1 family.

In terms of biological role, essential component of the cytosolic iron-sulfur (Fe/S) protein assembly machinery. Required for the maturation of extramitochondrial Fe/S proteins. The polypeptide is Probable cytosolic iron-sulfur protein assembly protein Ciao1 (Drosophila simulans (Fruit fly)).